We begin with the raw amino-acid sequence, 366 residues long: Probable UDP-arabinopyranose mutase 2 (366 aa).

The DXD motif motif lies at 104-106 (DDD). Arg152 is a glycosylation site (N-linked (Glc...) arginine).

The protein belongs to the RGP family. Homopentamer or homohexamer. It depends on Mn(2+) as a cofactor. The cofactor is Mg(2+). In terms of processing, reversibly glycosylated by UDP-glucose, UDP-xylose and UDP-galactose, but not UDP-mannose. As to expression, expressed in all tissues tested, including root, tuber, leaf, petiole, shoot, stolon and stem.

The protein localises to the secreted. It is found in the cell wall. It localises to the cell junction. Its subcellular location is the plasmodesma. The protein resides in the golgi apparatus. The catalysed reaction is UDP-beta-L-arabinofuranose = UDP-beta-L-arabinopyranose. In terms of biological role, probable UDP-L-arabinose mutase involved in the biosynthesis of cell wall non-cellulosic polysaccharides. Was initially shown to possess an autoglycosylating activity which is dependent on the presence of UDP-glucose and manganese. In Solanum tuberosum (Potato), this protein is Probable UDP-arabinopyranose mutase 2.